The sequence spans 227 residues: PKHD-type hydroxylase azo0608 (227 aa).

The Fe2OG dioxygenase domain maps to 78–178 (RVLTPFFNRY…RVACFMFMQS (101 aa)). Fe cation contacts are provided by H97, D99, and H159. Residue R169 participates in 2-oxoglutarate binding.

Fe(2+) serves as cofactor. It depends on L-ascorbate as a cofactor.

The chain is PKHD-type hydroxylase azo0608 from Azoarcus sp. (strain BH72).